A 344-amino-acid polypeptide reads, in one-letter code: Methionine import ATP-binding protein MetN (344 aa).

The ABC transporter domain occupies 2 to 241 (IEIKSVNKVF…PKTELAHQFI (240 aa)). 38 to 45 (GSSGAGKS) lines the ATP pocket.

It belongs to the ABC transporter superfamily. Methionine importer (TC 3.A.1.24) family. The complex is composed of two ATP-binding proteins (MetN), two transmembrane proteins (MetI) and a solute-binding protein (MetQ).

The protein localises to the cell inner membrane. It carries out the reaction L-methionine(out) + ATP + H2O = L-methionine(in) + ADP + phosphate + H(+). It catalyses the reaction D-methionine(out) + ATP + H2O = D-methionine(in) + ADP + phosphate + H(+). In terms of biological role, part of the ABC transporter complex MetNIQ involved in methionine import. Responsible for energy coupling to the transport system. This is Methionine import ATP-binding protein MetN from Vibrio cholerae serotype O1 (strain ATCC 39315 / El Tor Inaba N16961).